A 138-amino-acid polypeptide reads, in one-letter code: Hydrogenase maturation factor HypA (138 aa).

His2 is a binding site for Ni(2+). Zn(2+)-binding residues include Cys73, Cys76, Cys110, and Cys113.

It belongs to the HypA/HybF family.

Involved in the maturation of [NiFe] hydrogenases. Required for nickel insertion into the metal center of the hydrogenase. This is Hydrogenase maturation factor HypA from Thermococcus sibiricus (strain DSM 12597 / MM 739).